The primary structure comprises 157 residues: Protein Smg (157 aa).

This sequence belongs to the Smg family.

This chain is Protein Smg, found in Sodalis glossinidius (strain morsitans).